A 186-amino-acid chain; its full sequence is Large ribosomal subunit protein uL10 (186 aa).

In terms of assembly, part of the ribosomal stalk of the 50S ribosomal subunit. The N-terminus interacts with L11 and the large rRNA to form the base of the stalk. The C-terminus forms an elongated spine to which L12 dimers bind in a sequential fashion forming a multimeric L10(L12)X complex.

Functionally, forms part of the ribosomal stalk, playing a central role in the interaction of the ribosome with GTP-bound translation factors. This is Large ribosomal subunit protein uL10 from Rhodopseudomonas palustris (strain ATCC BAA-98 / CGA009).